The chain runs to 350 residues: Geranylgeranyl diphosphate synthase (350 aa).

Positions 70, 73, and 102 each coordinate isopentenyl diphosphate. Residues Asp-109 and Asp-113 each contribute to the Mg(2+) site. The DDXXD motif signature appears at 109-113; the sequence is DDVMD. Arg-119 serves as a coordination point for isopentenyl diphosphate. The DDXXD motif motif lies at 240-244; sequence DDLIG.

Belongs to the FPP/GGPP synthase family. It depends on Mg(2+) as a cofactor.

It catalyses the reaction isopentenyl diphosphate + (2E,6E)-farnesyl diphosphate = (2E,6E,10E)-geranylgeranyl diphosphate + diphosphate. It participates in isoprenoid biosynthesis; geranylgeranyl diphosphate biosynthesis; geranylgeranyl diphosphate from farnesyl diphosphate and isopentenyl diphosphate: step 1/1. In terms of biological role, catalyzes the condensation of isopentenyl pyrophosphate (IPP) with (2E,6E)-farnesyl diphosphate (E,E-FPP) to yield geranylgeranyl diphosphate (GGPP). The sequence is that of Geranylgeranyl diphosphate synthase from Mycobacterium tuberculosis (strain ATCC 25618 / H37Rv).